The sequence spans 125 residues: Large ribosomal subunit protein bL12 (125 aa).

The protein belongs to the bacterial ribosomal protein bL12 family. As to quaternary structure, homodimer. Part of the ribosomal stalk of the 50S ribosomal subunit. Forms a multimeric L10(L12)X complex, where L10 forms an elongated spine to which 2 to 4 L12 dimers bind in a sequential fashion. Binds GTP-bound translation factors.

Functionally, forms part of the ribosomal stalk which helps the ribosome interact with GTP-bound translation factors. Is thus essential for accurate translation. This is Large ribosomal subunit protein bL12 from Alkalilimnicola ehrlichii (strain ATCC BAA-1101 / DSM 17681 / MLHE-1).